Reading from the N-terminus, the 2273-residue chain is Acetyl-CoA carboxylase, mitochondrial (2273 aa).

The N-terminal 104 residues, 1 to 104, are a transit peptide targeting the mitochondrion; that stretch reads KGKTITHGQS…RGNIHKHTRL (104 aa). Positions 134–635 constitute a Biotin carboxylation domain; sequence VISKILIANN…STGWLDDLIL (502 aa). One can recognise an ATP-grasp domain in the interval 292–484; that stretch reads KTNFVSVPDD…LPATQLQIAM (193 aa). 332-337 contacts ATP; sequence GGGGKG. Residue Arg-459 is part of the active site. Residues 763 to 837 form the Biotinyl-binding domain; sequence LEAELNPTQV…EAGDVIAKLT (75 aa). Position 804 is an N6-biotinyllysine (Lys-804). A CoA carboxyltransferase N-terminal domain is found at 1532-1867; it reads PYSVKDWLQP…KRDMSPPLLE (336 aa). The segment at 1532–2187 is carboxyltransferase; that stretch reads PYSVKDWLQP…EGQVIKRLQK (656 aa). Residues Arg-1776, Lys-2080, and Arg-2082 each contribute to the CoA site. In terms of domain architecture, CoA carboxyltransferase C-terminal spans 1871–2187; it reads RWDRDVDFKP…EGQVIKRLQK (317 aa).

It depends on biotin as a cofactor.

The protein localises to the mitochondrion. It carries out the reaction hydrogencarbonate + acetyl-CoA + ATP = malonyl-CoA + ADP + phosphate + H(+). It catalyses the reaction N(6)-biotinyl-L-lysyl-[protein] + hydrogencarbonate + ATP = N(6)-carboxybiotinyl-L-lysyl-[protein] + ADP + phosphate + H(+). Its pathway is lipid metabolism; malonyl-CoA biosynthesis; malonyl-CoA from acetyl-CoA: step 1/1. Catalyzes the rate-limiting reaction in the mitochondrial fatty acid synthesis (FAS) type II pathway. Responsible for the production of the mitochondrial malonyl-CoA, used for the biosynthesis of the cofactor lipoic acid. This protein carries three functions: biotin carboxyl carrier protein, biotin carboxylase, and carboxyltransferase. The sequence is that of Acetyl-CoA carboxylase, mitochondrial (HFA1) from Saccharomyces cerevisiae (strain RM11-1a) (Baker's yeast).